The chain runs to 314 residues: Mycothiol acetyltransferase (314 aa).

Glutamate 39 contacts 1D-myo-inositol 2-(L-cysteinylamino)-2-deoxy-alpha-D-glucopyranoside. 80–82 (LTA) is an acetyl-CoA binding site. Positions 159 to 313 (FVCRRFDPIS…PTGELGHEPP (155 aa)) constitute an N-acetyltransferase domain. 1D-myo-inositol 2-(L-cysteinylamino)-2-deoxy-alpha-D-glucopyranoside-binding residues include glutamate 186, lysine 228, and glutamate 237. Acetyl-CoA-binding positions include 241-243 (LGV) and 248-254 (QGQGVGR). Tyrosine 275 lines the 1D-myo-inositol 2-(L-cysteinylamino)-2-deoxy-alpha-D-glucopyranoside pocket.

This sequence belongs to the acetyltransferase family. MshD subfamily. As to quaternary structure, monomer.

The catalysed reaction is 1D-myo-inositol 2-(L-cysteinylamino)-2-deoxy-alpha-D-glucopyranoside + acetyl-CoA = mycothiol + CoA + H(+). In terms of biological role, catalyzes the transfer of acetyl from acetyl-CoA to desacetylmycothiol (Cys-GlcN-Ins) to form mycothiol. This chain is Mycothiol acetyltransferase, found in Jonesia denitrificans (strain ATCC 14870 / DSM 20603 / BCRC 15368 / CIP 55.134 / JCM 11481 / NBRC 15587 / NCTC 10816 / Prevot 55134) (Listeria denitrificans).